Here is a 221-residue protein sequence, read N- to C-terminus: MRSDPEILVLGIGNLLWADEGFGVRAVEALQRHWVMSSNVQLLDGGTQGIYLVDRVRKADVLVVFDAVDYGLPPGTMKRVEDDEVPRFLGAKKMSLHQTGFQEVLALAAMLGDYPKHLLLIGVQPVELDDFGGSLRPQIKERITPAIEMALEYLAQFGVVARRREDSTVDSPHLPHPSLDLIAYESGRPGPEIACRIGDERVLTSLSARTVQPGNPHGDRQ.

Ni(2+)-binding residues include Glu20, Asp66, and His97.

The protein belongs to the peptidase A31 family.

Its function is as follows. Not known. Could be involved in the processing of hydrogenase. This Thiocapsa roseopersicina protein is Hydrogenase expression/formation protein HupD (hupD).